A 411-amino-acid chain; its full sequence is Alpha-galactosidase (411 aa).

An N-terminal signal peptide occupies residues 1-24; it reads MATHYSIIGGMIIVVLLMIIGSEG. Positions 25–47 are excised as a propeptide; that stretch reads GRLLEKKNRTSAEAEHYNVRRYL. N-linked (GlcNAc...) asparagine glycosylation is present at N32. C68 and C100 are oxidised to a cystine. An N-linked (GlcNAc...) asparagine glycan is attached at N145. C148 and C179 form a disulfide bridge. The active-site Nucleophile is the D177. 210–214 serves as a coordination point for substrate; it reads EWGWE. D232 functions as the Proton donor in the catalytic mechanism. N-linked (GlcNAc...) asparagine glycosylation is present at N352.

The protein belongs to the glycosyl hydrolase 27 family.

The catalysed reaction is Hydrolysis of terminal, non-reducing alpha-D-galactose residues in alpha-D-galactosides, including galactose oligosaccharides, galactomannans and galactolipids.. Its function is as follows. Involved in the hydrolysis of the galactomannan, it splits alpha-linked galactose moieties. It is particularly suitable for the hydrolysis of guar gum to a gum with improved gelling properties. Preferentially cleaves alpha-1,6 glycoside linkages. The chain is Alpha-galactosidase from Cyamopsis tetragonoloba (Guar).